Consider the following 210-residue polypeptide: dTTP/UTP pyrophosphatase (210 aa).

Residue D89 is the Proton acceptor of the active site.

The protein belongs to the Maf family. YhdE subfamily. A divalent metal cation serves as cofactor.

Its subcellular location is the cytoplasm. The enzyme catalyses dTTP + H2O = dTMP + diphosphate + H(+). It carries out the reaction UTP + H2O = UMP + diphosphate + H(+). Its function is as follows. Nucleoside triphosphate pyrophosphatase that hydrolyzes dTTP and UTP. May have a dual role in cell division arrest and in preventing the incorporation of modified nucleotides into cellular nucleic acids. This Burkholderia thailandensis (strain ATCC 700388 / DSM 13276 / CCUG 48851 / CIP 106301 / E264) protein is dTTP/UTP pyrophosphatase.